A 351-amino-acid chain; its full sequence is Probable minor fimbrial subunit LpfD (351 aa).

The N-terminal stretch at 1 to 22 (MKAAIALSLLGCVFGFSGKAFA) is a signal peptide.

This sequence belongs to the fimbrial protein family.

It localises to the fimbrium. In terms of biological role, part of the lpfABCC'DE fimbrial operon. LP fimbriae may participate in the interaction with eukaryotic cells by assisting in microcolony formation. This is Probable minor fimbrial subunit LpfD (lpfD) from Escherichia coli O157:H7.